The primary structure comprises 89 residues: Small ribosomal subunit protein uS15 (89 aa).

The disordered stretch occupies residues M1–A25. A compositionally biased stretch (polar residues) spans K8–A25.

The protein belongs to the universal ribosomal protein uS15 family. In terms of assembly, part of the 30S ribosomal subunit. Forms a bridge to the 50S subunit in the 70S ribosome, contacting the 23S rRNA.

Functionally, one of the primary rRNA binding proteins, it binds directly to 16S rRNA where it helps nucleate assembly of the platform of the 30S subunit by binding and bridging several RNA helices of the 16S rRNA. Forms an intersubunit bridge (bridge B4) with the 23S rRNA of the 50S subunit in the ribosome. This Parasynechococcus marenigrum (strain WH8102) protein is Small ribosomal subunit protein uS15.